Here is a 311-residue protein sequence, read N- to C-terminus: Heparan sulfate glucosamine 3-O-sulfotransferase 1 (311 aa).

An N-terminal signal peptide occupies residues 1-20 (MTLLLLGAVLLVAQPQLVHS). The N-linked (GlcNAc...) asparagine glycan is linked to Asn-52. Residues 68-72 (KGGTR), Arg-151, and Ser-159 each bind 3'-phosphoadenylyl sulfate. Residues Asn-196, Asn-246, and Asn-253 are each glycosylated (N-linked (GlcNAc...) asparagine). Tyr-259 is a binding site for 3'-phosphoadenylyl sulfate. Residues Cys-260 and Cys-269 are joined by a disulfide bond. Residue 274 to 278 (KGRAH) participates in 3'-phosphoadenylyl sulfate binding.

Belongs to the sulfotransferase 1 family.

It is found in the golgi apparatus lumen. The enzyme catalyses alpha-D-glucosaminyl-[heparan sulfate](n) + 3'-phosphoadenylyl sulfate = 3-sulfo-alpha-D-glucosaminyl-[heparan sulfate](n) + adenosine 3',5'-bisphosphate + H(+). Functionally, sulfotransferase that utilizes 3'-phospho-5'-adenylyl sulfate (PAPS) to catalyze the transfer of a sulfo group to position 3 of glucosamine residues in heparan. Catalyzes the rate limiting step in the biosynthesis of heparan sulfate (HSact). This modification is a crucial step in the biosynthesis of anticoagulant heparan sulfate as it completes the structure of the antithrombin pentasaccharide binding site. The protein is Heparan sulfate glucosamine 3-O-sulfotransferase 1 (Hs3st1) of Mus musculus (Mouse).